Reading from the N-terminus, the 305-residue chain is Glycine--tRNA ligase alpha subunit (305 aa).

It belongs to the class-II aminoacyl-tRNA synthetase family. In terms of assembly, tetramer of two alpha and two beta subunits.

Its subcellular location is the cytoplasm. It carries out the reaction tRNA(Gly) + glycine + ATP = glycyl-tRNA(Gly) + AMP + diphosphate. This Vibrio campbellii (strain ATCC BAA-1116) protein is Glycine--tRNA ligase alpha subunit.